A 1653-amino-acid chain; its full sequence is Ciliary rootlet coiled-coil protein 2 (1653 aa).

Positions 1 to 17 are enriched in polar residues; the sequence is MSSASSEPGNGDASQQP. Positions 1–57 are disordered; the sequence is MSSASSEPGNGDASQQPLLGLDTVIQRLEDTILSPTASREDRALTVRGEGRQASPTP. The segment covering 38-50 has biased composition (basic and acidic residues); it reads SREDRALTVRGEG. Coiled-coil stretches lie at residues 86 to 145 and 310 to 351; these read VARV…SELE and KVAL…LVAQ. The tract at residues 367-396 is disordered; it reads LGEPRRPLRSPQRATSPHQGASPPHICSPA. The stretch at 423–1215 forms a coiled coil; sequence LKSSQALVAS…QRKLAEVEAA (793 aa). Positions 1302–1356 are disordered; sequence GLQRQSPWASPEQPGSPTKGSDSSQALPGQQGTSPPARPHSPLRWPSPTPGGRSS. Residues 1304–1335 are compositionally biased toward polar residues; the sequence is QRQSPWASPEQPGSPTKGSDSSQALPGQQGTS. Positions 1361–1570 form a coiled coil; the sequence is VATVQDILRD…QAQMTEMEQA (210 aa).

Belongs to the rootletin family.

This Homo sapiens (Human) protein is Ciliary rootlet coiled-coil protein 2.